The chain runs to 388 residues: Succinate--CoA ligase [ADP-forming] subunit beta (388 aa).

Residues 9 to 244 form the ATP-grasp domain; sequence KQLFAEYGLP…PSQDDPREAH (236 aa). ATP is bound by residues K46, 53–55, E99, T102, and E107; that span reads GRG. The Mg(2+) site is built by N199 and D213. Substrate-binding positions include N264 and 321–323; that span reads GIV.

Belongs to the succinate/malate CoA ligase beta subunit family. Heterotetramer of two alpha and two beta subunits. It depends on Mg(2+) as a cofactor.

It carries out the reaction succinate + ATP + CoA = succinyl-CoA + ADP + phosphate. It catalyses the reaction GTP + succinate + CoA = succinyl-CoA + GDP + phosphate. Its pathway is carbohydrate metabolism; tricarboxylic acid cycle; succinate from succinyl-CoA (ligase route): step 1/1. Its function is as follows. Succinyl-CoA synthetase functions in the citric acid cycle (TCA), coupling the hydrolysis of succinyl-CoA to the synthesis of either ATP or GTP and thus represents the only step of substrate-level phosphorylation in the TCA. The beta subunit provides nucleotide specificity of the enzyme and binds the substrate succinate, while the binding sites for coenzyme A and phosphate are found in the alpha subunit. The protein is Succinate--CoA ligase [ADP-forming] subunit beta of Pseudomonas syringae pv. tomato (strain ATCC BAA-871 / DC3000).